Consider the following 144-residue polypeptide: Large ribosomal subunit protein uL13 (144 aa).

This sequence belongs to the universal ribosomal protein uL13 family. As to quaternary structure, part of the 50S ribosomal subunit.

Functionally, this protein is one of the early assembly proteins of the 50S ribosomal subunit, although it is not seen to bind rRNA by itself. It is important during the early stages of 50S assembly. This chain is Large ribosomal subunit protein uL13, found in Lachnoclostridium phytofermentans (strain ATCC 700394 / DSM 18823 / ISDg) (Clostridium phytofermentans).